The sequence spans 198 residues: Superoxide dismutase [Fe] (198 aa).

Positions 27, 74, 158, and 162 each coordinate Fe cation.

It belongs to the iron/manganese superoxide dismutase family. As to quaternary structure, homodimer. Fe cation is required as a cofactor.

Its subcellular location is the cytoplasm. It catalyses the reaction 2 superoxide + 2 H(+) = H2O2 + O2. Its function is as follows. Destroys superoxide anion radicals which are normally produced within the cells and which are toxic to biological systems. The chain is Superoxide dismutase [Fe] (SODB) from Plasmodium falciparum (isolate 3D7).